The primary structure comprises 592 residues: Bifunctional purine biosynthesis protein ATIC (592 aa).

The residue at position 1 (Met-1) is an N-acetylmethionine. An MGS-like domain is found at 1–146 (MASSQLALFS…KNHARVTVVC (146 aa)). The segment at 1–198 (MASSQLALFS…ISDYFRRQYS (198 aa)) is IMP cyclohydrolase. IMP-binding positions include 12 to 14 (SDK), 34 to 37 (SGGT), 64 to 67 (RVKT), 101 to 102 (CN), and 125 to 126 (DI). Lys-137 acts as the Proton donor/acceptor; for FAICAR cyclization activity in catalysis. The residue at position 199 (Lys-199) is an N6-acetyllysine. An AICAR formyltransferase region spans residues 199 to 592 (KGISQMPLRY…AHTDLRLFHH (394 aa)). 5-amino-1-(5-phospho-beta-D-ribosyl)imidazole-4-carboxamide-binding positions include 207–208 (RY), His-267, Gly-316, Asp-339, Asn-431, and Arg-451. Catalysis depends on His-267, which acts as the Proton acceptor; for AICAR formyltransferase activity. Ile-452 serves as a coordination point for (6R)-10-formyltetrahydrofolate. Phe-541 is a binding site for 5-amino-1-(5-phospho-beta-D-ribosyl)imidazole-4-carboxamide. (6R)-10-formyltetrahydrofolate contacts are provided by residues Asp-546 and 565 to 566 (ST). Residue Arg-588 coordinates 5-amino-1-(5-phospho-beta-D-ribosyl)imidazole-4-carboxamide.

This sequence belongs to the PurH family. As to quaternary structure, homodimer. Associates with internalized INSR complexes on Golgi/endosomal membranes. Interacts with INSR; ATIC together with PRKAA2/AMPK2 and HACD3/PTPLAD1 is proposed to be part of a signaling network regulating INSR autophosphorylation and endocytosis. As to expression, expressed in liver.

It localises to the cytoplasm. The protein resides in the cytosol. The catalysed reaction is (6R)-10-formyltetrahydrofolate + 5-amino-1-(5-phospho-beta-D-ribosyl)imidazole-4-carboxamide = 5-formamido-1-(5-phospho-D-ribosyl)imidazole-4-carboxamide + (6S)-5,6,7,8-tetrahydrofolate. The enzyme catalyses 10-formyldihydrofolate + 5-amino-1-(5-phospho-beta-D-ribosyl)imidazole-4-carboxamide = 5-formamido-1-(5-phospho-D-ribosyl)imidazole-4-carboxamide + 7,8-dihydrofolate. It carries out the reaction IMP + H2O = 5-formamido-1-(5-phospho-D-ribosyl)imidazole-4-carboxamide. The protein operates within purine metabolism; IMP biosynthesis via de novo pathway; 5-formamido-1-(5-phospho-D-ribosyl)imidazole-4-carboxamide from 5-amino-1-(5-phospho-D-ribosyl)imidazole-4-carboxamide (10-formyl THF route): step 1/1. Its pathway is purine metabolism; IMP biosynthesis via de novo pathway; IMP from 5-formamido-1-(5-phospho-D-ribosyl)imidazole-4-carboxamide: step 1/1. With respect to regulation, AMP and XMP inhibit AICAR formyltransferase activity. Its function is as follows. Bifunctional enzyme that catalyzes the last two steps of purine biosynthesis. Acts as a transformylase that incorporates a formyl group to the AMP analog AICAR (5-amino-1-(5-phospho-beta-D-ribosyl)imidazole-4-carboxamide) to produce the intermediate formyl-AICAR (FAICAR). Can use both 10-formyldihydrofolate and 10-formyltetrahydrofolate as the formyl donor in this reaction. Also catalyzes the cyclization of FAICAR to inosine monophosphate (IMP). Promotes insulin receptor/INSR autophosphorylation and is involved in INSR internalization. This chain is Bifunctional purine biosynthesis protein ATIC (Atic), found in Rattus norvegicus (Rat).